The sequence spans 217 residues: Proteasome subunit beta type-6-B like protein (217 aa).

Residues 1–16 (MERHFMDSQIKGVSTG) constitute a propeptide, removed in mature form. Catalysis depends on Thr-17, which acts as the Nucleophile.

Belongs to the peptidase T1B family. As to quaternary structure, the 26S proteasome consists of a 20S proteasome core and two 19S regulatory subunits. The 20S proteasome core is composed of 28 subunits that are arranged in four stacked rings, resulting in a barrel-shaped structure. The two end rings are each formed by seven alpha subunits, and the two central rings are each formed by seven beta subunits. The catalytic chamber with the active sites is on the inside of the barrel.

The protein localises to the cytoplasm. It is found in the nucleus. It catalyses the reaction Cleavage of peptide bonds with very broad specificity.. Its function is as follows. The proteasome is a multicatalytic proteinase complex which is characterized by its ability to cleave peptides with Arg, Phe, Tyr, Leu, and Glu adjacent to the leaving group at neutral or slightly basic pH. The proteasome has an ATP-dependent proteolytic activity. This subunit is involved in antigen processing to generate class I binding peptides. In Salmo salar (Atlantic salmon), this protein is Proteasome subunit beta type-6-B like protein (psmb6l-b).